The primary structure comprises 541 residues: Tryptophan N-monooxygenase 1 (541 aa).

A helical transmembrane segment spans residues 21–41 (FSTLYLLSTLQAFVAITLVML). Cys-477 serves as a coordination point for heme.

It belongs to the cytochrome P450 family. The cofactor is heme. Found in all tissues tested. Highest expression in roots, and low expression in stem.

The protein localises to the membrane. It carries out the reaction L-tryptophan + 2 reduced [NADPH--hemoprotein reductase] + 2 O2 = (E)-(indol-3-yl)acetaldehyde oxime + 2 oxidized [NADPH--hemoprotein reductase] + CO2 + 3 H2O + 2 H(+). Functionally, converts tryptophan to indole-3-acetaldoxime, a precursor for tryptophan-derived glucosinolates and indole-3-acetic acid (IAA). Involved in the biosynthetic pathway to 4-hydroxyindole-3-carbonyl nitrile (4-OH-ICN), a cyanogenic metabolite required for inducible pathogen defense. This chain is Tryptophan N-monooxygenase 1 (CYP79B2), found in Arabidopsis thaliana (Mouse-ear cress).